The primary structure comprises 258 residues: Electron transfer flavoprotein beta subunit lysine methyltransferase (258 aa).

The protein belongs to the methyltransferase superfamily. ETFBKMT family.

It is found in the cytoplasm. It localises to the mitochondrion matrix. It catalyses the reaction L-lysyl-[protein] + 3 S-adenosyl-L-methionine = N(6),N(6),N(6)-trimethyl-L-lysyl-[protein] + 3 S-adenosyl-L-homocysteine + 3 H(+). Functionally, protein-lysine methyltransferase that selectively trimethylates the flavoprotein ETFB in mitochondria. Thereby, may negatively regulate the function of ETFB in electron transfer from Acyl-CoA dehydrogenases to the main respiratory chain. This chain is Electron transfer flavoprotein beta subunit lysine methyltransferase, found in Danio rerio (Zebrafish).